Reading from the N-terminus, the 258-residue chain is Type III pantothenate kinase (258 aa).

ATP is bound at residue 6 to 13 (DVGNTNIV). Residues tyrosine 100 and 107-110 (GADR) each bind substrate. The Proton acceptor role is filled by aspartate 109. Aspartate 129 contacts K(+). Threonine 132 lines the ATP pocket. Position 184 (threonine 184) interacts with substrate.

Belongs to the type III pantothenate kinase family. In terms of assembly, homodimer. The cofactor is NH4(+). Requires K(+) as cofactor.

Its subcellular location is the cytoplasm. The catalysed reaction is (R)-pantothenate + ATP = (R)-4'-phosphopantothenate + ADP + H(+). The protein operates within cofactor biosynthesis; coenzyme A biosynthesis; CoA from (R)-pantothenate: step 1/5. Its function is as follows. Catalyzes the phosphorylation of pantothenate (Pan), the first step in CoA biosynthesis. The sequence is that of Type III pantothenate kinase from Clostridium botulinum (strain Loch Maree / Type A3).